The chain runs to 373 residues: Anhydro-N-acetylmuramic acid kinase (373 aa).

ATP is bound at residue 12–19 (GTSLDGVD).

Belongs to the anhydro-N-acetylmuramic acid kinase family.

The enzyme catalyses 1,6-anhydro-N-acetyl-beta-muramate + ATP + H2O = N-acetyl-D-muramate 6-phosphate + ADP + H(+). It participates in amino-sugar metabolism; 1,6-anhydro-N-acetylmuramate degradation. The protein operates within cell wall biogenesis; peptidoglycan recycling. Its function is as follows. Catalyzes the specific phosphorylation of 1,6-anhydro-N-acetylmuramic acid (anhMurNAc) with the simultaneous cleavage of the 1,6-anhydro ring, generating MurNAc-6-P. Is required for the utilization of anhMurNAc either imported from the medium or derived from its own cell wall murein, and thus plays a role in cell wall recycling. This is Anhydro-N-acetylmuramic acid kinase from Serratia proteamaculans (strain 568).